The following is a 433-amino-acid chain: KH domain-containing, RNA-binding, signal transduction-associated protein 1 (433 aa).

The tract at residues 1 to 79 is disordered; it reads MQRRDDSSAR…PLLPGGAVKM (79 aa). A compositionally biased stretch (low complexity) spans 41-76; sequence GAQHPQPLLTGGAAAGSSGAQGPAAANPAPLLPGGA. The tract at residues 82 to 243 is involved in homodimerization; sequence ENKYLPELMA…VKKFLVPDMM (162 aa). One can recognise a KH domain in the interval 171 to 197; that stretch reads QEETGAKISVLGKGSMRDKAKEEELRK. 3 disordered regions span residues 259-305, 317-351, and 403-433; these read GVPE…ALVR, AAVARGVPPPPAVRGAPAPRARAAGIQRIPLPPPP, and QDDWNGTRPSLKAPPARPVKGAYREHPYGRY. Pro residues predominate over residues 277–300; it reads APPPPPPVPRGRGVGPPPPPPPPR. The segment covering 329–342 has biased composition (low complexity); that stretch reads VRGAPAPRARAAGI. The span at 424 to 433 shows a compositional bias: basic and acidic residues; that stretch reads AYREHPYGRY.

Belongs to the KHDRBS family. As to quaternary structure, self-associates to form homooligomers when bound to RNA, oligomerization appears to be limited when binding to proteins. Tyrosine phosphorylated by several non-receptor tyrosine kinases including LCK, FYN and JAK3. In terms of processing, acetylated. Positively correlates with ability to bind RNA. Post-translationally, methylated by HRMT1L2. Required for nuclear localization.

The protein resides in the nucleus. The protein localises to the cytoplasm. Its subcellular location is the membrane. Its function is as follows. Recruited and tyrosine phosphorylated by several receptor systems, for example the T-cell, leptin and insulin receptors. Once phosphorylated, functions as an adapter protein in signal transduction cascades by binding to SH2 and SH3 domain-containing proteins. Role in G2-M progression in the cell cycle. Represses CBP-dependent transcriptional activation apparently by competing with other nuclear factors for binding to CBP. Also acts as a putative regulator of mRNA stability and/or translation rates and mediates mRNA nuclear export. Plays a role in the regulation of alternative splicing and influences mRNA splice site selection and exon inclusion. The polypeptide is KH domain-containing, RNA-binding, signal transduction-associated protein 1 (Gallus gallus (Chicken)).